The sequence spans 1106 residues: Carbamoyl phosphate synthase large chain (1106 aa).

Positions methionine 1–glutamate 401 are carboxyphosphate synthetic domain. ATP is bound by residues arginine 129, arginine 169, glycine 175, glycine 176, arginine 208, valine 210, glutamate 215, glycine 241, valine 242, histidine 243, glutamine 284, and glutamate 298. Residues lysine 133 to isoleucine 327 enclose the ATP-grasp 1 domain. Positions 284, 298, and 300 each coordinate Mg(2+). Residues glutamine 284, glutamate 298, and asparagine 300 each contribute to the Mn(2+) site. An oligomerization domain region spans residues isoleucine 402–alanine 577. The tract at residues isoleucine 578 to glycine 964 is carbamoyl phosphate synthetic domain. Residues aspartate 706–methionine 896 form the ATP-grasp 2 domain. Arginine 742, glutamine 781, leucine 783, glutamate 787, glycine 812, valine 813, histidine 814, serine 815, glutamine 855, and glutamate 867 together coordinate ATP. 3 residues coordinate Mg(2+): glutamine 855, glutamate 867, and asparagine 869. 3 residues coordinate Mn(2+): glutamine 855, glutamate 867, and asparagine 869. One can recognise an MGS-like domain in the interval phenylalanine 965 to asparagine 1106. The allosteric domain stretch occupies residues phenylalanine 965–asparagine 1106.

It belongs to the CarB family. As to quaternary structure, composed of two chains; the small (or glutamine) chain promotes the hydrolysis of glutamine to ammonia, which is used by the large (or ammonia) chain to synthesize carbamoyl phosphate. Tetramer of heterodimers (alpha,beta)4. Mg(2+) serves as cofactor. Requires Mn(2+) as cofactor.

The enzyme catalyses hydrogencarbonate + L-glutamine + 2 ATP + H2O = carbamoyl phosphate + L-glutamate + 2 ADP + phosphate + 2 H(+). It catalyses the reaction hydrogencarbonate + NH4(+) + 2 ATP = carbamoyl phosphate + 2 ADP + phosphate + 2 H(+). It participates in amino-acid biosynthesis; L-arginine biosynthesis; carbamoyl phosphate from bicarbonate: step 1/1. Its pathway is pyrimidine metabolism; UMP biosynthesis via de novo pathway; (S)-dihydroorotate from bicarbonate: step 1/3. Large subunit of the glutamine-dependent carbamoyl phosphate synthetase (CPSase). CPSase catalyzes the formation of carbamoyl phosphate from the ammonia moiety of glutamine, carbonate, and phosphate donated by ATP, constituting the first step of 2 biosynthetic pathways, one leading to arginine and/or urea and the other to pyrimidine nucleotides. The large subunit (synthetase) binds the substrates ammonia (free or transferred from glutamine from the small subunit), hydrogencarbonate and ATP and carries out an ATP-coupled ligase reaction, activating hydrogencarbonate by forming carboxy phosphate which reacts with ammonia to form carbamoyl phosphate. In Natranaerobius thermophilus (strain ATCC BAA-1301 / DSM 18059 / JW/NM-WN-LF), this protein is Carbamoyl phosphate synthase large chain.